The following is a 104-amino-acid chain: Large ribosomal subunit protein uL24 (104 aa).

Belongs to the universal ribosomal protein uL24 family. As to quaternary structure, part of the 50S ribosomal subunit.

Functionally, one of two assembly initiator proteins, it binds directly to the 5'-end of the 23S rRNA, where it nucleates assembly of the 50S subunit. In terms of biological role, one of the proteins that surrounds the polypeptide exit tunnel on the outside of the subunit. The polypeptide is Large ribosomal subunit protein uL24 (Bradyrhizobium sp. (strain ORS 278)).